The primary structure comprises 62 residues: Photosystem II reaction center protein Z (62 aa).

The next 2 helical transmembrane spans lie at 8–28 (ALFA…VAFA) and 41–61 (FSGA…NSFI).

Belongs to the PsbZ family. PSII is composed of 1 copy each of membrane proteins PsbA, PsbB, PsbC, PsbD, PsbE, PsbF, PsbH, PsbI, PsbJ, PsbK, PsbL, PsbM, PsbT, PsbY, PsbZ, Psb30/Ycf12, at least 3 peripheral proteins of the oxygen-evolving complex and a large number of cofactors. It forms dimeric complexes.

It is found in the plastid. The protein localises to the chloroplast thylakoid membrane. Functionally, may control the interaction of photosystem II (PSII) cores with the light-harvesting antenna, regulates electron flow through the 2 photosystem reaction centers. PSII is a light-driven water plastoquinone oxidoreductase, using light energy to abstract electrons from H(2)O, generating a proton gradient subsequently used for ATP formation. This is Photosystem II reaction center protein Z from Adiantum capillus-veneris (Maidenhair fern).